Here is a 474-residue protein sequence, read N- to C-terminus: Phosphatidylserine synthase 2 (474 aa).

The Lumenal portion of the chain corresponds to 1-62; it reads MLRSDVRRVA…DDGTNTFFWR (62 aa). The helical transmembrane segment at 63–83 threads the bilayer; sequence AHTLTVLFILTCSLGYVTLLE. Residues 84 to 96 are Cytoplasmic-facing; sequence ETPQDTAYNAKRG. Residues 97–117 form a helical membrane-spanning segment; the sequence is IIASILVFLCFGVTQAKDGPF. Over 118 to 126 the chain is Lumenal; sequence SRPHPAYWR. Residues 127–147 traverse the membrane as a helical segment; that stretch reads FWLCVSVVYELFLIFILFQTV. Residues 148–313 lie on the Cytoplasmic side of the membrane; it reads HDGRQFMKFI…EWKPASSLRR (166 aa). The chain crosses the membrane as a helical span at residues 314 to 334; sequence WLAVCGIIFVFLLAELNTFYL. Residue Lys-335 is a topological domain, lumenal. Residues 336-356 traverse the membrane as a helical segment; it reads FVLWMPPEHYLVLLRLVFFVN. Topologically, residues 357-376 are cytoplasmic; it reads VGGVAMREIYDFMDDLKFHK. Residues 377–397 form a helical membrane-spanning segment; it reads KLGQQAWMVAAITVTEFLIVV. At 398–403 the chain is on the lumenal side; it reads KYDPYT. Residues 404-424 form a helical membrane-spanning segment; sequence ITLPLPFYVTQCWILGIVLVL. Residues 425-474 are Cytoplasmic-facing; that stretch reads TWTVWRFFIRDITLRYKEIRQQKQHRNEEEKSHRNGDVNSEKDTNKHKKH. A compositionally biased stretch (basic and acidic residues) spans 448-468; the sequence is QHRNEEEKSHRNGDVNSEKDT. A disordered region spans residues 448–474; it reads QHRNEEEKSHRNGDVNSEKDTNKHKKH.

The protein belongs to the phosphatidyl serine synthase family.

It is found in the endoplasmic reticulum membrane. The catalysed reaction is a 1,2-diacyl-sn-glycero-3-phosphoethanolamine + L-serine = a 1,2-diacyl-sn-glycero-3-phospho-L-serine + ethanolamine. It carries out the reaction 1-hexadecanoyl-2-(9Z-octadecenoyl)-sn-glycero-3-phosphoethanolamine + L-serine = 1-hexadecanoyl-2-(9Z-octadecenoyl)-sn-glycero-3-phospho-L-serine + ethanolamine. The enzyme catalyses 1-hexadecanoyl-2-(4Z,7Z,10Z,13Z,16Z,19Z-docosahexaenoyl)-sn-glycero-3-phosphoethanolamine + L-serine = 1-hexadecanoyl-2-(4Z,7Z,10Z,13Z,16Z,19Z-docosahexaenoyl)-sn-glycero-3-phosphoserine + ethanolamine. It catalyses the reaction 1-octadecanoyl-2-(5Z,8Z,11Z,14Z)-eicosatetraenoyl-sn-glycero-3-phosphoethanolamine + L-serine = 1-octadecanoyl-2-(5Z,8Z,11Z,14Z)-eicosatetraenoyl-sn-glycero-3-phosphoserine + ethanolamine. The catalysed reaction is 1-octadecanoyl-2-(4Z,7Z,10Z,13Z,16Z,19Z-docosahexaenoyl)-sn-glycero-3-phosphoethanolamine + L-serine = 1-octadecanoyl-2-(4Z,7Z,10Z,13Z,16Z,19Z-docosahexaenoyl)-sn-glycero-3-phosphoserine + ethanolamine. It carries out the reaction 1-(1Z-octadecenyl)-2-(4Z,7Z,10Z,13Z,16Z,19Z-docosahexaenoyl)-sn-glycero-3-phosphoethanolamine + L-serine = 1-(1Z-octadecenyl)-2-(4Z,7Z,10Z,13Z,16Z,19Z-docosahexaenoyl)-sn-glycero-3-phospho-L-serine + ethanolamine. The enzyme catalyses 1-octadecanoyl-2-(9Z-octadecenoyl)-sn-glycero-3-phosphoethanolamine + L-serine = 1-octadecanoyl-2-(9Z-octadecenoyl)-sn-glycero-3-phospho-L-serine + ethanolamine. It catalyses the reaction 1-(1Z-octadecenyl)-2-(9Z-octadecenoyl)-sn-glycero-3-phosphoethanolamine + L-serine = 1-(1Z-octadecenyl)-2-(9Z-octadecenoyl)-sn-glycero-3-phospho-L-serine + ethanolamine. The catalysed reaction is 1-(1Z-octadecenyl)-2-(5Z,8Z,11Z,14Z- eicosatetraenoyl)-sn-glycero-3-phosphoethanolamine + L-serine = 1-(1Z-octadecenyl)-2-(5Z,8Z,11Z,14Z-eicosatetraenoyl)-sn-glycero-3-phospho-L-serine + ethanolamine. Its pathway is phospholipid metabolism; phosphatidylserine biosynthesis. Its function is as follows. Catalyzes a base-exchange reaction in which the polar head group of phosphatidylethanolamine (PE) or phosphatidylcholine (PC) is replaced by L-serine. Catalyzes the conversion of phosphatatidylethanolamine and does not act on phosphatidylcholine. Can utilize both phosphatidylethanolamine (PE) plasmalogen and diacyl PE as substrate and the latter is six times better utilized, indicating the importance of an ester linkage at the sn-1 position. Although it shows no sn-1 fatty acyl preference, exhibits significant preference towards docosahexaenoic acid (22:6n-3) compared with 18:1 or 20:4 at the sn-2 position. The chain is Phosphatidylserine synthase 2 (ptdss2) from Xenopus tropicalis (Western clawed frog).